The chain runs to 93 residues: Small ribosomal subunit protein uS19c (93 aa).

The protein belongs to the universal ribosomal protein uS19 family.

The protein localises to the plastid. It localises to the chloroplast. Protein S19 forms a complex with S13 that binds strongly to the 16S ribosomal RNA. This is Small ribosomal subunit protein uS19c from Ipomoea purpurea (Common morning glory).